The primary structure comprises 1067 residues: Kinesin-like protein KIF11-B (1067 aa).

Positions 18 to 359 (NIQVVVRCRP…LDYANRAKSI (342 aa)) constitute a Kinesin motor domain. 105 to 112 (GQTGTGKT) serves as a coordination point for ATP. Residues 365 to 480 (VNQKLTKKAL…SKEQLAQESF (116 aa)) adopt a coiled-coil conformation. The residue at position 937 (Thr937) is a Phosphothreonine; by CDK1. The residue at position 1046 (Ser1046) is a Phosphoserine; by NEK6.

It belongs to the TRAFAC class myosin-kinesin ATPase superfamily. Kinesin family. BimC subfamily. In terms of assembly, heterotetramer of two heavy and two light chains. Interacts with aurka. Phosphorylation of Thr-937 during mitosis controls the association of this protein with the spindle apparatus. Post-translationally, a subset of this protein primarily localized at the spindle pole is phosphorylated by NEK6 during mitosis. In terms of processing, phosphorylated on a serine residue by aurka. In unfertilized eggs, shows highest expression in the germinal vesicle and radial yolk-poor channels. Also present in testis.

It localises to the cytoplasm. The protein localises to the cytoskeleton. It is found in the spindle pole. In terms of biological role, plus end-directed motor protein required for establishing a bipolar spindle. Associates with both interphase and spindle microtubules. May be involved in nuclear divisions taking place during the development of unfertilized eggs. Required in non-mitotic cells for transport of secretory proteins from the Golgi complex to the cell surface. The sequence is that of Kinesin-like protein KIF11-B (kif11-b) from Xenopus laevis (African clawed frog).